A 628-amino-acid chain; its full sequence is Choline transporter-like protein 2 (628 aa).

Over 1-31 (MSSEDLQDHHEIGNEVIKKKGVYTKKKCQDC) the chain is Cytoplasmic. The helical transmembrane segment at 32 to 52 (FFLILFLLFWAGMIVVAAFGV) threads the bilayer. Residues 53-204 (KNGKPDRIVK…EILTDLTNSW (152 aa)) are Extracellular-facing. N-linked (GlcNAc...) asparagine glycans are attached at residues N82, N118, N146, and N168. Residues 205-225 (RYLIYGALIAMGLGLTWIFLL) form a helical membrane-spanning segment. A topological domain (cytoplasmic) is located at residue R226. Residues 227–247 (FFAGFITWLTVFAAYACLGLL) traverse the membrane as a helical segment. The Extracellular portion of the chain corresponds to 248 to 282 (TAQVYFQWQDSKDAYENTIPSQRLVMQEKNILALK). The chain crosses the membrane as a helical span at residues 283–303 (VIFIILCVVCGIFALILLALF). Over 304-319 (SRIRIAIRIIKECSRA) the chain is Cytoplasmic. A helical membrane pass occupies residues 320–340 (IGIMPSIFFFPIFIFLLLCGF). Over 341-381 (TVYWVYIGVYLATAGSPTYDDQYRFTGYEADSKLQKIQIYH) the chain is Extracellular. Residues 382 to 402 (FFGYLWTFAFILALNQTTIAG) form a helical membrane-spanning segment. Topologically, residues 403–432 (AISSWYWVQDKKDTPFFPVWSSFFRVIRYH) are cytoplasmic. Residues 433 to 453 (LGSIALGSLILAIVQFIRWVL) form a helical membrane-spanning segment. The Extracellular portion of the chain corresponds to 454 to 530 (RFLEKKFKGK…RVAAVNLVSS (77 aa)). A helical membrane pass occupies residues 531-551 (FLMFLGRVFITAATVGISLYL). Over 552-559 (LKEHENLS) the chain is Cytoplasmic. A helical membrane pass occupies residues 560-580 (FYIIPVILIGFIAFAISTGFM). At 581 to 628 (SVYDMSIDTMLLCFCEDCERNDGSPERPYYMSKSLRKFVDGKGRSKCC) the chain is on the extracellular side.

It belongs to the CTL (choline transporter-like) family.

Its subcellular location is the cell membrane. It localises to the mitochondrion outer membrane. The enzyme catalyses choline(out) + n H(+)(in) = choline(in) + n H(+)(out). It carries out the reaction ethanolamine(out) + n H(+)(in) = ethanolamine(in) + n H(+)(out). Functionally, choline/H+ antiporter, mainly in mitochodria. Also acts as a low-affinity ethanolamine/H+ antiporter, regulating the supply of extracellular ethanolamine (Etn) for the CDP-Etn pathway, redistribute intracellular Etn and balance the CDP-Cho and CDP-Etn arms of the Kennedy pathway. The polypeptide is Choline transporter-like protein 2 (slc44a2) (Dictyostelium discoideum (Social amoeba)).